A 316-amino-acid chain; its full sequence is 4-hydroxy-3-methylbut-2-enyl diphosphate reductase (316 aa).

Position 18 (C18) interacts with [4Fe-4S] cluster. 2 residues coordinate (2E)-4-hydroxy-3-methylbut-2-enyl diphosphate: H47 and H80. Dimethylallyl diphosphate-binding residues include H47 and H80. Isopentenyl diphosphate is bound by residues H47 and H80. Residue C102 participates in [4Fe-4S] cluster binding. H130 contributes to the (2E)-4-hydroxy-3-methylbut-2-enyl diphosphate binding site. Residue H130 participates in dimethylallyl diphosphate binding. Isopentenyl diphosphate is bound at residue H130. Residue E132 is the Proton donor of the active site. T171 lines the (2E)-4-hydroxy-3-methylbut-2-enyl diphosphate pocket. C201 serves as a coordination point for [4Fe-4S] cluster. Residues S229, S230, N231, and S274 each contribute to the (2E)-4-hydroxy-3-methylbut-2-enyl diphosphate site. Dimethylallyl diphosphate is bound by residues S229, S230, N231, and S274. S229, S230, N231, and S274 together coordinate isopentenyl diphosphate.

Belongs to the IspH family. [4Fe-4S] cluster is required as a cofactor.

The catalysed reaction is isopentenyl diphosphate + 2 oxidized [2Fe-2S]-[ferredoxin] + H2O = (2E)-4-hydroxy-3-methylbut-2-enyl diphosphate + 2 reduced [2Fe-2S]-[ferredoxin] + 2 H(+). It catalyses the reaction dimethylallyl diphosphate + 2 oxidized [2Fe-2S]-[ferredoxin] + H2O = (2E)-4-hydroxy-3-methylbut-2-enyl diphosphate + 2 reduced [2Fe-2S]-[ferredoxin] + 2 H(+). It participates in isoprenoid biosynthesis; dimethylallyl diphosphate biosynthesis; dimethylallyl diphosphate from (2E)-4-hydroxy-3-methylbutenyl diphosphate: step 1/1. It functions in the pathway isoprenoid biosynthesis; isopentenyl diphosphate biosynthesis via DXP pathway; isopentenyl diphosphate from 1-deoxy-D-xylulose 5-phosphate: step 6/6. In terms of biological role, catalyzes the conversion of 1-hydroxy-2-methyl-2-(E)-butenyl 4-diphosphate (HMBPP) into a mixture of isopentenyl diphosphate (IPP) and dimethylallyl diphosphate (DMAPP). Acts in the terminal step of the DOXP/MEP pathway for isoprenoid precursor biosynthesis. This is 4-hydroxy-3-methylbut-2-enyl diphosphate reductase from Paracoccus denitrificans (strain Pd 1222).